We begin with the raw amino-acid sequence, 323 residues long: Queuosine 5'-phosphate N-glycosylase/hydrolase (323 aa).

Queuosine 5'-phosphate-binding residues include asparagine 72, tyrosine 93, lysine 199, phenylalanine 229, aspartate 231, aspartate 298, tryptophan 302, and glutamine 306. The active-site Nucleophile or transition state stabilizer is aspartate 231.

It belongs to the QNG1 protein family. Monomer.

The enzyme catalyses queuosine 5'-phosphate + H2O = queuine + D-ribose 5-phosphate. Its function is as follows. Catalyzes the hydrolysis of queuosine 5'-phosphate, releasing the nucleobase queuine (q). Is likely required for salvage of queuine from exogenous queuosine (Q) that is imported and then converted to queuosine 5'-phosphate intracellularly. In vitro, can also catalyze the release of the q base directly from Q as substrate; however, Q may not be the biologically relevant substrate. Shows a very low activity on queuosine 3',5'-diphosphate, and cannot release q from queuosine 3'-phosphate and from the 5'-nucleotides AMP, UMP, CMP or GMP, indicating specificity for the queuine base. The sequence is that of Queuosine 5'-phosphate N-glycosylase/hydrolase from Sphaerobacter thermophilus (strain ATCC 49802 / DSM 20745 / KCCM 41009 / NCIMB 13125 / S 6022).